The chain runs to 301 residues: Acetyl-coenzyme A carboxylase carboxyl transferase subunit beta (301 aa).

Positions 23 to 292 (VWTKCDSCGQ…PSPDEPRESV (270 aa)) constitute a CoA carboxyltransferase N-terminal domain. Zn(2+) contacts are provided by cysteine 27, cysteine 30, cysteine 46, and cysteine 49. Residues 27-49 (CDSCGQVLYRAELERNLEVCPKC) form a C4-type zinc finger. Residues 280–301 (LPAPSPDEPRESVVVPDQEPEA) are disordered.

It belongs to the AccD/PCCB family. In terms of assembly, acetyl-CoA carboxylase is a heterohexamer composed of biotin carboxyl carrier protein (AccB), biotin carboxylase (AccC) and two subunits each of ACCase subunit alpha (AccA) and ACCase subunit beta (AccD). The cofactor is Zn(2+).

Its subcellular location is the cytoplasm. The catalysed reaction is N(6)-carboxybiotinyl-L-lysyl-[protein] + acetyl-CoA = N(6)-biotinyl-L-lysyl-[protein] + malonyl-CoA. The protein operates within lipid metabolism; malonyl-CoA biosynthesis; malonyl-CoA from acetyl-CoA: step 1/1. Its function is as follows. Component of the acetyl coenzyme A carboxylase (ACC) complex. Biotin carboxylase (BC) catalyzes the carboxylation of biotin on its carrier protein (BCCP) and then the CO(2) group is transferred by the transcarboxylase to acetyl-CoA to form malonyl-CoA. The protein is Acetyl-coenzyme A carboxylase carboxyl transferase subunit beta of Enterobacter sp. (strain 638).